The chain runs to 264 residues: Thymidylate synthase (264 aa).

Arg21 contacts dUMP. Residue His51 participates in (6R)-5,10-methylene-5,6,7,8-tetrahydrofolate binding. 126-127 (RR) is a binding site for dUMP. Cys146 functions as the Nucleophile in the catalytic mechanism. DUMP contacts are provided by residues 166–169 (RSAD), Asn177, and 207–209 (HIY). Asp169 is a binding site for (6R)-5,10-methylene-5,6,7,8-tetrahydrofolate. Ala263 is a binding site for (6R)-5,10-methylene-5,6,7,8-tetrahydrofolate.

This sequence belongs to the thymidylate synthase family. Bacterial-type ThyA subfamily. Homodimer.

It is found in the cytoplasm. It carries out the reaction dUMP + (6R)-5,10-methylene-5,6,7,8-tetrahydrofolate = 7,8-dihydrofolate + dTMP. It functions in the pathway pyrimidine metabolism; dTTP biosynthesis. Catalyzes the reductive methylation of 2'-deoxyuridine-5'-monophosphate (dUMP) to 2'-deoxythymidine-5'-monophosphate (dTMP) while utilizing 5,10-methylenetetrahydrofolate (mTHF) as the methyl donor and reductant in the reaction, yielding dihydrofolate (DHF) as a by-product. This enzymatic reaction provides an intracellular de novo source of dTMP, an essential precursor for DNA biosynthesis. This chain is Thymidylate synthase, found in Bacteroides thetaiotaomicron (strain ATCC 29148 / DSM 2079 / JCM 5827 / CCUG 10774 / NCTC 10582 / VPI-5482 / E50).